A 364-amino-acid polypeptide reads, in one-letter code: DNA polymerase IV (364 aa).

The UmuC domain maps to 14–198; that stretch reads IIHIDMDAFF…LPVEKFHGVG (185 aa). Residues Asp-18 and Asp-116 each contribute to the Mg(2+) site. Glu-117 is an active-site residue.

This sequence belongs to the DNA polymerase type-Y family. Monomer. Mg(2+) is required as a cofactor.

It is found in the cytoplasm. It carries out the reaction DNA(n) + a 2'-deoxyribonucleoside 5'-triphosphate = DNA(n+1) + diphosphate. Functionally, poorly processive, error-prone DNA polymerase involved in untargeted mutagenesis. Copies undamaged DNA at stalled replication forks, which arise in vivo from mismatched or misaligned primer ends. These misaligned primers can be extended by PolIV. Exhibits no 3'-5' exonuclease (proofreading) activity. May be involved in translesional synthesis, in conjunction with the beta clamp from PolIII. The protein is DNA polymerase IV of Lactococcus lactis subsp. cremoris (strain MG1363).